Consider the following 448-residue polypeptide: Tryptophan dimethylallyltransferase 1 (448 aa).

L-tryptophan is bound by residues 80 to 81 (IL) and E89. R100, K186, and Y188 together coordinate substrate. The L-tryptophan site is built by Y190 and R251. 7 residues coordinate substrate: R264, K266, Y268, Q350, Y352, Y416, and Y420.

Belongs to the tryptophan dimethylallyltransferase family. As to quaternary structure, homodimer.

It catalyses the reaction L-tryptophan + dimethylallyl diphosphate = 4-(3-methylbut-2-enyl)-L-tryptophan + diphosphate. Its pathway is alkaloid biosynthesis; ergot alkaloid biosynthesis. Its function is as follows. Catalyzes the first step of ergot alkaloid biosynthesis. Ergot alkaloids, which are produced by endophyte fungi, can enhance plant host fitness, but also cause livestock toxicosis to host plants. The sequence is that of Tryptophan dimethylallyltransferase 1 (dmaW1) from Epichloe coenophiala (Tall fescue endophyte fungus).